A 160-amino-acid polypeptide reads, in one-letter code: Endoplasmic reticulum transmembrane protein 2 (160 aa).

At 1–2 (MG) the chain is on the lumenal side. Residues 3–23 (VYLAVLFSLLVIEMAILFILV) form a helical membrane-spanning segment. The Cytoplasmic portion of the chain corresponds to 24 to 45 (LPLPQRMRRWLYIRYSIISTNK). A helical transmembrane segment spans residues 46–66 (KFRTYMVGIMIFVGLLFIDSW). Topologically, residues 67-103 (KRSQIRVSTYRNQKNPYIINSVTPVDALASRAYNQRN) are lumenal. A helical membrane pass occupies residues 104–124 (VYISGFIIYFYICILTVMSIL). Residues 125-160 (RRIVEWNDKMKAGDDILKEKLRRKQKYLEELQKKKF) lie on the Cytoplasmic side of the membrane. Positions 157–160 (KKKF) match the Di-lysine motif motif.

Belongs to the BCAP29/BCAP31 family.

It is found in the endoplasmic reticulum membrane. In terms of biological role, may play a role in anterograde transport of membrane proteins from the endoplasmic reticulum to the Golgi. In Saccharomyces cerevisiae (strain ATCC 204508 / S288c) (Baker's yeast), this protein is Endoplasmic reticulum transmembrane protein 2 (YET2).